The chain runs to 457 residues: MTASDWAGFFADEASLDREAYLFLDYYLECSGDPELAAAHFCSEQSTAQWRRVGSDEDLRPRFGARVVDLQILDGARPEFSYGVGSGSDAPVTACRLRIAHPHGNFGPRLPNLLSAICGEGTFFSPGAPIVKLLDIEFPESYLACFQGPQFGVAGLRERLQVHDRPIFFGVIKPNIGLPPEAFSELGHESWLGGLDIAKDDEMLADTDWCPLDRRAELLGEARRRAEAATGVPKIYLANITDEVDRLVELHDRAVERGANALLINAMPTGLSAVRMLRKHAQVPLMAHFPFIAPFARLERFGVHTRVFTKLQRLAGYDVIIMPGFGPRMHMTDDEVRACATACLEPMGPIKPSLPVPGGSDWAGTLRPLYEKLGTVDFGFVPGRGVFGHPMGPRAGAASIRQAWEAIVAGETLEERAKRHPELSAAIAAFGKPAHGQAASPQPSEQASEPDAAGGDS.

3 residues coordinate Mg(2+): lysine 199, aspartate 201, and glutamate 202. At lysine 199 the chain carries N6-carboxylysine. Residues 426 to 457 (AIAAFGKPAHGQAASPQPSEQASEPDAAGGDS) form a disordered region.

It belongs to the RuBisCO large chain family. Type IV subfamily. The cofactor is Mg(2+).

In terms of biological role, may be involved in sulfur metabolism and oxidative stress response. Does not show RuBisCO activity. The polypeptide is Ribulose bisphosphate carboxylase-like protein (Allochromatium vinosum (strain ATCC 17899 / DSM 180 / NBRC 103801 / NCIMB 10441 / D) (Chromatium vinosum)).